Here is a 420-residue protein sequence, read N- to C-terminus: UDP-N-acetylglucosamine 1-carboxyvinyltransferase (420 aa).

22–23 (KN) contributes to the phosphoenolpyruvate binding site. A UDP-N-acetyl-alpha-D-glucosamine-binding site is contributed by R93. The active-site Proton donor is the C117. A 2-(S-cysteinyl)pyruvic acid O-phosphothioketal modification is found at C117. The UDP-N-acetyl-alpha-D-glucosamine site is built by D306 and I328.

Belongs to the EPSP synthase family. MurA subfamily.

It localises to the cytoplasm. It catalyses the reaction phosphoenolpyruvate + UDP-N-acetyl-alpha-D-glucosamine = UDP-N-acetyl-3-O-(1-carboxyvinyl)-alpha-D-glucosamine + phosphate. The protein operates within cell wall biogenesis; peptidoglycan biosynthesis. Cell wall formation. Adds enolpyruvyl to UDP-N-acetylglucosamine. This is UDP-N-acetylglucosamine 1-carboxyvinyltransferase from Colwellia psychrerythraea (strain 34H / ATCC BAA-681) (Vibrio psychroerythus).